The following is a 120-amino-acid chain: MVRILANGEIVQDDDPRVRTTTQHRSSSSQQGFFNRGHGAPPGGPGPRQQQAGARLGAAQSPFSDLNRQLVNMGFPQWHLGNHVVEPVTSILLLFLLMMLGVRGLLLVGLVYLVSHLSQR.

Residues 12-59 form a disordered region; sequence QDDDPRVRTTTQHRSSSSQQGFFNRGHGAPPGGPGPRQQQAGARLGAA. Composition is skewed to low complexity over residues 19–39 and 47–59; these read RTTT…RGHG and PRQQ…LGAA. Serine 61 carries the phosphoserine modification. A helical membrane pass occupies residues 91-111; sequence ILLLFLLMMLGVRGLLLVGLV.

Belongs to the FAM241 family.

The protein resides in the membrane. Its function is as follows. May play a role in lysosome homeostasis. This chain is Protein FAM241B, found in Mus musculus (Mouse).